The following is a 262-amino-acid chain: Phosphatidylglycerol--prolipoprotein diacylglyceryl transferase (262 aa).

4 consecutive transmembrane segments (helical) span residues 17–37 (FAIH…LLLG), 59–79 (LLFA…TLFY), 94–114 (IWEG…ALYW), and 121–141 (TTFF…LAFG). Arg-142 contributes to the a 1,2-diacyl-sn-glycero-3-phospho-(1'-sn-glycerol) binding site. Helical transmembrane passes span 176 to 196 (QIYQ…FYAG), 201 to 221 (VGQV…LAEY), and 231 to 251 (LLGL…FFGI).

It belongs to the Lgt family.

It is found in the cell inner membrane. The enzyme catalyses L-cysteinyl-[prolipoprotein] + a 1,2-diacyl-sn-glycero-3-phospho-(1'-sn-glycerol) = an S-1,2-diacyl-sn-glyceryl-L-cysteinyl-[prolipoprotein] + sn-glycerol 1-phosphate + H(+). It functions in the pathway protein modification; lipoprotein biosynthesis (diacylglyceryl transfer). Functionally, catalyzes the transfer of the diacylglyceryl group from phosphatidylglycerol to the sulfhydryl group of the N-terminal cysteine of a prolipoprotein, the first step in the formation of mature lipoproteins. This chain is Phosphatidylglycerol--prolipoprotein diacylglyceryl transferase, found in Polynucleobacter necessarius subsp. necessarius (strain STIR1).